Here is a 244-residue protein sequence, read N- to C-terminus: tRNA (guanine-N(7)-)-methyltransferase (244 aa).

4 residues coordinate S-adenosyl-L-methionine: E75, E100, D127, and D150. D150 is an active-site residue. Substrate-binding positions include K154, D186, and 223 to 226 (TRFE).

The protein belongs to the class I-like SAM-binding methyltransferase superfamily. TrmB family.

It carries out the reaction guanosine(46) in tRNA + S-adenosyl-L-methionine = N(7)-methylguanosine(46) in tRNA + S-adenosyl-L-homocysteine. The protein operates within tRNA modification; N(7)-methylguanine-tRNA biosynthesis. Catalyzes the formation of N(7)-methylguanine at position 46 (m7G46) in tRNA. The polypeptide is tRNA (guanine-N(7)-)-methyltransferase (Xylella fastidiosa (strain 9a5c)).